The primary structure comprises 348 residues: Zinc-type alcohol dehydrogenase-like protein C2E1P3.01 (348 aa).

This sequence belongs to the zinc-containing alcohol dehydrogenase family. Quinone oxidoreductase subfamily.

It is found in the mitochondrion. The protein is Zinc-type alcohol dehydrogenase-like protein C2E1P3.01 of Schizosaccharomyces pombe (strain 972 / ATCC 24843) (Fission yeast).